The chain runs to 501 residues: Putative zinc metalloprotease TM_0890 (501 aa).

His-17 is a binding site for Zn(2+). Glu-18 is a catalytic residue. His-21 is a Zn(2+) binding site. The next 4 helical transmembrane spans lie at 93–115 (FLITLAGPLFSILAGYLLFLPIT), 401–420 (VQTGQIVGVVGLAGVISAAS), 427–449 (VLTVVAVITISLGVLNLLPLPAL), and 474–496 (IIHFLGFIFLMILFLYITFLDIG). In terms of domain architecture, PDZ spans 96–180 (TLAGPLFSIL…LVIIRNGEKK (85 aa)).

Belongs to the peptidase M50B family. The cofactor is Zn(2+).

The protein localises to the cell inner membrane. The polypeptide is Putative zinc metalloprotease TM_0890 (Thermotoga maritima (strain ATCC 43589 / DSM 3109 / JCM 10099 / NBRC 100826 / MSB8)).